Reading from the N-terminus, the 154-residue chain is Transcriptional repressor NrdR (154 aa).

A zinc finger spans residues 3 to 34 (CPFCSHNDSKVIDSRPTDEGQAIRRRRECISC). One can recognise an ATP-cone domain in the interval 49–139 (LIVVKKNGNR…VYREFKDINT (91 aa)).

It belongs to the NrdR family. Requires Zn(2+) as cofactor.

Functionally, negatively regulates transcription of bacterial ribonucleotide reductase nrd genes and operons by binding to NrdR-boxes. In Alkaliphilus oremlandii (strain OhILAs) (Clostridium oremlandii (strain OhILAs)), this protein is Transcriptional repressor NrdR.